The chain runs to 548 residues: Dihydroxy-acid dehydratase (548 aa).

Residue Asp78 participates in Mg(2+) binding. Position 119 (Cys119) interacts with [2Fe-2S] cluster. Mg(2+)-binding residues include Asp120 and Lys121. At Lys121 the chain carries N6-carboxylysine. Cys185 provides a ligand contact to [2Fe-2S] cluster. Glu438 lines the Mg(2+) pocket. Ser464 functions as the Proton acceptor in the catalytic mechanism.

Belongs to the IlvD/Edd family. As to quaternary structure, homodimer. It depends on [2Fe-2S] cluster as a cofactor. Mg(2+) is required as a cofactor.

The catalysed reaction is (2R)-2,3-dihydroxy-3-methylbutanoate = 3-methyl-2-oxobutanoate + H2O. It carries out the reaction (2R,3R)-2,3-dihydroxy-3-methylpentanoate = (S)-3-methyl-2-oxopentanoate + H2O. It participates in amino-acid biosynthesis; L-isoleucine biosynthesis; L-isoleucine from 2-oxobutanoate: step 3/4. Its pathway is amino-acid biosynthesis; L-valine biosynthesis; L-valine from pyruvate: step 3/4. Functionally, functions in the biosynthesis of branched-chain amino acids. Catalyzes the dehydration of (2R,3R)-2,3-dihydroxy-3-methylpentanoate (2,3-dihydroxy-3-methylvalerate) into 2-oxo-3-methylpentanoate (2-oxo-3-methylvalerate) and of (2R)-2,3-dihydroxy-3-methylbutanoate (2,3-dihydroxyisovalerate) into 2-oxo-3-methylbutanoate (2-oxoisovalerate), the penultimate precursor to L-isoleucine and L-valine, respectively. This is Dihydroxy-acid dehydratase from Methanothrix thermoacetophila (strain DSM 6194 / JCM 14653 / NBRC 101360 / PT) (Methanosaeta thermophila).